The primary structure comprises 249 residues: Probable septum site-determining protein MinC (249 aa).

Residues 115-141 are disordered; it reads KPAQEAPAQAEPEAAAAPEPANEPAPA. The segment covering 118 to 141 has biased composition (low complexity); that stretch reads QEAPAQAEPEAAAAPEPANEPAPA.

It belongs to the MinC family. Interacts with MinD and FtsZ.

Its function is as follows. Cell division inhibitor that blocks the formation of polar Z ring septums. Rapidly oscillates between the poles of the cell to destabilize FtsZ filaments that have formed before they mature into polar Z rings. Prevents FtsZ polymerization. This chain is Probable septum site-determining protein MinC, found in Marinobacter nauticus (strain ATCC 700491 / DSM 11845 / VT8) (Marinobacter aquaeolei).